Reading from the N-terminus, the 436-residue chain is uncharacterized protein (436 aa).

This is an uncharacterized protein from Diadromus pulchellus (Parasitic wasp).